Consider the following 729-residue polypeptide: ATP-dependent RNA helicase DHX15 homolog (729 aa).

Residues 1–25 (MSKRRIEVGETYGSKAKKDPEASSS) form a disordered region. One can recognise a Helicase ATP-binding domain in the interval 82 to 246 (MRLLSLHQCI…FDNAPLMKVP (165 aa)). 95–102 (GETGSGKT) serves as a coordination point for ATP. Residues 193–196 (DEAH) carry the DEAH box motif. Residues 271-451 (TVIQIHMCEE…TVVLQLKKLG (181 aa)) form the Helicase C-terminal domain.

It belongs to the DEAD box helicase family. DEAH subfamily. DDX15/PRP43 sub-subfamily.

It carries out the reaction ATP + H2O = ADP + phosphate + H(+). RNA helicase involved in mRNA processing and antiviral innate immunity. Acts as an activator of the p38 MAPK cascade. This Drosophila melanogaster (Fruit fly) protein is ATP-dependent RNA helicase DHX15 homolog.